We begin with the raw amino-acid sequence, 487 residues long: Glutamyl-tRNA(Gln) amidotransferase subunit A (487 aa).

Catalysis depends on charge relay system residues K79 and S158. S182 serves as the catalytic Acyl-ester intermediate.

The protein belongs to the amidase family. GatA subfamily. In terms of assembly, heterotrimer of A, B and C subunits.

The catalysed reaction is L-glutamyl-tRNA(Gln) + L-glutamine + ATP + H2O = L-glutaminyl-tRNA(Gln) + L-glutamate + ADP + phosphate + H(+). Functionally, allows the formation of correctly charged Gln-tRNA(Gln) through the transamidation of misacylated Glu-tRNA(Gln) in organisms which lack glutaminyl-tRNA synthetase. The reaction takes place in the presence of glutamine and ATP through an activated gamma-phospho-Glu-tRNA(Gln). The chain is Glutamyl-tRNA(Gln) amidotransferase subunit A from Ehrlichia chaffeensis (strain ATCC CRL-10679 / Arkansas).